The following is a 75-amino-acid chain: uncharacterized protein (75 aa).

The span at 1–14 (MNDNNDNNNNNKNI) shows a compositional bias: low complexity. A disordered region spans residues 1-30 (MNDNNDNNNNNKNIDNVDDDNDDNDKGKYK).

This is an uncharacterized protein from Dictyostelium discoideum (Social amoeba).